The primary structure comprises 110 residues: Mobility group protein 1B (110 aa).

Positions 5-71 (PKRPLSAYML…NYIRALQEYE (67 aa)) form a DNA-binding region, HMG box. The span at 71–81 (ERNGGGGDDKG) shows a compositional bias: basic and acidic residues. The segment at 71–110 (ERNGGGGDDKGKKRKGAAPKKGAGKKSKKGAHSDDDGDSE) is disordered. Basic residues predominate over residues 82-100 (KKRKGAAPKKGAGKKSKKG).

The protein belongs to the HMGB family.

The protein localises to the nucleus. Its subcellular location is the chromosome. Its function is as follows. Found in condensed chromomeres. Binds preferentially to AT-rich DNA. This chain is Mobility group protein 1B (HMG1B), found in Chironomus tentans (Midge).